The following is a 163-amino-acid chain: MPSFDIVSEVDLHEVRNAVENAQRELTTRWDFRNVEASFELNEKTESVKTTSVSEFQVQQLLDILREKMAKRGIDGAVLNIPEEMTHSGKTYSVEATLKQGIDTPLAKKIVKMIKDSKLKVQAQIQGEQVRVTGKSRDDLQAVMKLVREGELGQPFQFTNFRD.

It belongs to the YajQ family.

In terms of biological role, nucleotide-binding protein. The chain is Nucleotide-binding protein PMI0103 from Proteus mirabilis (strain HI4320).